A 91-amino-acid polypeptide reads, in one-letter code: PqqA binding protein (91 aa).

The protein belongs to the PqqD family. As to quaternary structure, monomer. Interacts with PqqE.

It functions in the pathway cofactor biosynthesis; pyrroloquinoline quinone biosynthesis. Functions as a PqqA binding protein and presents PqqA to PqqE, in the pyrroloquinoline quinone (PQQ) biosynthetic pathway. The protein is PqqA binding protein of Pseudomonas fluorescens (strain Pf0-1).